Reading from the N-terminus, the 119-residue chain is Large ribosomal subunit protein bL20 (119 aa).

Belongs to the bacterial ribosomal protein bL20 family.

Functionally, binds directly to 23S ribosomal RNA and is necessary for the in vitro assembly process of the 50S ribosomal subunit. It is not involved in the protein synthesizing functions of that subunit. The sequence is that of Large ribosomal subunit protein bL20 from Halalkalibacterium halodurans (strain ATCC BAA-125 / DSM 18197 / FERM 7344 / JCM 9153 / C-125) (Bacillus halodurans).